The primary structure comprises 326 residues: Phenylalanine--tRNA ligase alpha subunit (326 aa).

Glu-251 contacts Mg(2+).

The protein belongs to the class-II aminoacyl-tRNA synthetase family. Phe-tRNA synthetase alpha subunit type 1 subfamily. Tetramer of two alpha and two beta subunits. It depends on Mg(2+) as a cofactor.

It is found in the cytoplasm. It carries out the reaction tRNA(Phe) + L-phenylalanine + ATP = L-phenylalanyl-tRNA(Phe) + AMP + diphosphate + H(+). The chain is Phenylalanine--tRNA ligase alpha subunit from Idiomarina loihiensis (strain ATCC BAA-735 / DSM 15497 / L2-TR).